A 200-amino-acid chain; its full sequence is MASSGNKNINAKLVLLGDVGAGKSSLVLRFVKDQFVEFQESTIGAAFFSQTLAVNDATVKFEIWDTAGQERYHSLAPMYYRGAAAAIIVFDITNQASFERAKKWVQELQAQGNPNMVMALAGNKADLLDARKVSAEEAEIYAQENSLFFMETSAKTATNVKDIFYEIAKRLPRVQPAENPTGMVLPNGPGATAVSSSCCA.

17–25 (GDVGAGKSS) contacts GTP. The Effector region signature appears at 39-47 (QESTIGAAF). Residues 65-69 (DTAGQ), 123-126 (NKAD), and 153-154 (SA) each bind GTP. 2 S-geranylgeranyl cysteine lipidation sites follow: C198 and C199.

The protein belongs to the small GTPase superfamily. Rab family. Interacts with VPS9A. Interacts with EREX (via PX domain). Binds to VPS3. As to expression, high in stem, root, and inflorescence.

It localises to the endosome membrane. The protein resides in the prevacuolar compartment membrane. Its function is as follows. Involved in the trafficking of soluble cargo proteins from the prevacuolar compartment to the central vacuole. Involved in vacuolar transport of storage proteins with EREX as effector. Regulates membrane trafficking to protein storage vacuoles (PSVs). The chain is Ras-related protein RABF2a (RABF2A) from Arabidopsis thaliana (Mouse-ear cress).